The following is a 134-amino-acid chain: Cytochrome b (134 aa).

A run of 3 helical transmembrane segments spans residues 33 to 53 (FGSL…FLAM), 77 to 98 (WLLR…YLHV), and 113 to 133 (WNVG…GYVL). 2 residues coordinate heme b: histidine 83 and histidine 97.

This sequence belongs to the cytochrome b family. In terms of assembly, the cytochrome bc1 complex contains 11 subunits: 3 respiratory subunits (MT-CYB, CYC1 and UQCRFS1), 2 core proteins (UQCRC1 and UQCRC2) and 6 low-molecular weight proteins (UQCRH/QCR6, UQCRB/QCR7, UQCRQ/QCR8, UQCR10/QCR9, UQCR11/QCR10 and a cleavage product of UQCRFS1). This cytochrome bc1 complex then forms a dimer. The cofactor is heme b.

It localises to the mitochondrion inner membrane. Component of the ubiquinol-cytochrome c reductase complex (complex III or cytochrome b-c1 complex) that is part of the mitochondrial respiratory chain. The b-c1 complex mediates electron transfer from ubiquinol to cytochrome c. Contributes to the generation of a proton gradient across the mitochondrial membrane that is then used for ATP synthesis. The protein is Cytochrome b (MT-CYB) of Chiroderma trinitatum (Little big-eyed bat).